Reading from the N-terminus, the 511-residue chain is GATA zinc finger domain-containing protein 15 (511 aa).

The segment covering 1–111 (TNNNNFNNIN…FNDNCNNNSN (111 aa)) has biased composition (low complexity). Disordered stretches follow at residues 1-194 (TNNN…NTFF), 214-313 (NVNN…NENK), and 325-355 (NLQY…VLSP). The segment covering 124–135 (SLQNINQYPLSP) has biased composition (polar residues). Residues 136-166 (NNNKSSNQHLSHSSSNVNSQYYQTPYYQPSQ) are compositionally biased toward low complexity. The segment covering 167-185 (KQNSPNSTPPLNGCQYENH) has biased composition (polar residues). Low complexity-rich tracts occupy residues 214 to 309 (NVNN…NNDN) and 337 to 351 (SGST…PTSP). Residues 453-478 (CQACGTRASPEWRKGPDGFKSLCNAC) form a GATA-type zinc finger.

This chain is GATA zinc finger domain-containing protein 15 (gtaO), found in Dictyostelium discoideum (Social amoeba).